A 181-amino-acid polypeptide reads, in one-letter code: ATP synthase subunit delta (181 aa).

It belongs to the ATPase delta chain family. In terms of assembly, F-type ATPases have 2 components, F(1) - the catalytic core - and F(0) - the membrane proton channel. F(1) has five subunits: alpha(3), beta(3), gamma(1), delta(1), epsilon(1). F(0) has three main subunits: a(1), b(2) and c(10-14). The alpha and beta chains form an alternating ring which encloses part of the gamma chain. F(1) is attached to F(0) by a central stalk formed by the gamma and epsilon chains, while a peripheral stalk is formed by the delta and b chains.

It localises to the cell inner membrane. F(1)F(0) ATP synthase produces ATP from ADP in the presence of a proton or sodium gradient. F-type ATPases consist of two structural domains, F(1) containing the extramembraneous catalytic core and F(0) containing the membrane proton channel, linked together by a central stalk and a peripheral stalk. During catalysis, ATP synthesis in the catalytic domain of F(1) is coupled via a rotary mechanism of the central stalk subunits to proton translocation. In terms of biological role, this protein is part of the stalk that links CF(0) to CF(1). It either transmits conformational changes from CF(0) to CF(1) or is implicated in proton conduction. The chain is ATP synthase subunit delta from Mannheimia succiniciproducens (strain KCTC 0769BP / MBEL55E).